Reading from the N-terminus, the 533-residue chain is MTKKRIAVIGGGVSGLSSIKCCLEEGLEPVCFERSADIGGLWRFQENPEEGRASIYKSVIINTSKEMMCFSDYPIPDHYPNFMHNSHVLEYFRMYAKEFGLLKYIQFKTTVCNVKKRPDFSTSGQWEVVTEHEGKTKVDVFDAVMVCTGHHTNAHLPLESFPGIEKFKGQYFHSRDYKNPEAFTGKRVVIIGIGNSGGDLAVEISHTAKQVFLSTRRGSWILNRVGKHGYPTDVLLSSRFTYFLSKILGQSLSNAYVEKQMNERFDHEMFGLKPKHRAMSQHPTVNDDLPNRIIAGMVKVKGNVKEFTETAAIFEDGSREDDIDAVIFATGYSFDFPFLEDSVKVVKNKVSLYKKVFPPNLERPTLAIIGLIQPLGAIMPISELQGRWAVQVFKGLKTLPSQSEMMAEITKAQEEIAKRYVDSQRHTIQGDYIQTMEEIAEFVGVKPNLLSLAFTDPKLALKLFFGPCTPIHYRLQGPGKWHGARKAILTTYDRIRKPLNTRETEKSNSMVSAVTTGCFMLAVVFFAIIMAYA.

Arg-5 carries the dimethylated arginine modification. Residues 10 to 14 (GGGVS), Glu-33, and 41 to 42 (LW) each bind FAD. Ser-54 is modified (phosphoserine). A Phosphotyrosine modification is found at Tyr-56. The residue at position 58 (Ser-58) is a Phosphoserine. 62–63 (NT) is a binding site for FAD. An NADP(+)-binding site is contributed by 196-199 (SGGD). Residue Ser-280 is modified to Phosphoserine. Residue Thr-284 is modified to Phosphothreonine. Ser-401 carries the post-translational modification Phosphoserine. A helical membrane pass occupies residues 510–530 (MVSAVTTGCFMLAVVFFAIIM).

Belongs to the FMO family. It depends on FAD as a cofactor. As to expression, expressed in liver.

It is found in the microsome membrane. The protein localises to the endoplasmic reticulum membrane. It catalyses the reaction N,N-dimethylaniline + NADPH + O2 + H(+) = N,N-dimethylaniline N-oxide + NADP(+) + H2O. It carries out the reaction NADPH + O2 + H(+) = H2O2 + NADP(+). The enzyme catalyses heptan-2-one + NADPH + O2 + H(+) = pentyl acetate + NADP(+) + H2O. The catalysed reaction is octan-3-one + NADPH + O2 + H(+) = pentyl propanoate + NADP(+) + H2O. It catalyses the reaction octan-3-one + NADPH + O2 + H(+) = ethyl hexanoate + NADP(+) + H2O. It carries out the reaction hexan-3-one + NADPH + O2 + H(+) = ethyl butanoate + NADP(+) + H2O. The enzyme catalyses hexan-3-one + NADPH + O2 + H(+) = propyl propanoate + NADP(+) + H2O. The catalysed reaction is heptan-4-one + NADPH + O2 + H(+) = propyl butanoate + NADP(+) + H2O. It catalyses the reaction (2E)-geranial + NADPH + O2 + H(+) = (1E)-2,6-dimethylhepta-1,5-dien-1-yl formate + NADP(+) + H2O. It carries out the reaction sulcatone + NADPH + O2 + H(+) = 4-methylpent-3-en-1-yl acetate + NADP(+) + H2O. In terms of biological role, acts as a Baeyer-Villiger monooxygenase on a broad range of substrates. Catalyzes the insertion of an oxygen atom into a carbon-carbon bond adjacent to a carbonyl, which converts ketones to esters. Active on diverse carbonyl compounds, whereas soft nucleophiles are mostly non- or poorly reactive. In contrast with other forms of FMO it is non- or poorly active on 'classical' substrates such as drugs, pesticides, and dietary components containing soft nucleophilic heteroatoms. Able to oxidize drug molecules bearing a carbonyl group on an aliphatic chain, such as nabumetone and pentoxifylline. Also, in the absence of substrates, shows slow but yet significant NADPH oxidase activity. Acts as a positive modulator of cholesterol biosynthesis as well as glucose homeostasis, promoting metabolic aging via pleiotropic effects. The polypeptide is Flavin-containing monooxygenase 5 (FMO5) (Cavia porcellus (Guinea pig)).